Reading from the N-terminus, the 45-residue chain is MPMATTIDGTDYTNIMPSTVSTRVYLGCSIGIDTSTTGFTCFSWY.

This sequence belongs to the coronaviruses ns4/ns4.8 protein family.

This is Non-structural protein of 4.8 kDa from Bos taurus (Bovine).